The following is a 694-amino-acid chain: Putative serine/threonine-protein kinase R679 (694 aa).

The region spanning 167 to 548 is the Protein kinase domain; that stretch reads ITKNKTVGKG…ITNILKHLFT (382 aa). ATP is bound by residues 173-181 and Lys-196; that span reads VGKGAAGIA. Asp-395 serves as the catalytic Proton acceptor.

The protein belongs to the protein kinase superfamily. Ser/Thr protein kinase family.

The protein resides in the virion. The enzyme catalyses L-seryl-[protein] + ATP = O-phospho-L-seryl-[protein] + ADP + H(+). The catalysed reaction is L-threonyl-[protein] + ATP = O-phospho-L-threonyl-[protein] + ADP + H(+). This is Putative serine/threonine-protein kinase R679 from Acanthamoeba polyphaga (Amoeba).